Reading from the N-terminus, the 83-residue chain is U25-theraphotoxin-Cg1b (83 aa).

The first 23 residues, 1-23, serve as a signal peptide directing secretion; it reads MRFHTLLFLSFLLLVSCALICTA. Residues 24–48 constitute a propeptide that is removed on maturation; the sequence is QHPGLEKSGMFHENVGKGQHIEEKR. Intrachain disulfides connect Cys-50–Cys-66, Cys-57–Cys-71, and Cys-65–Cys-79.

This sequence belongs to the neurotoxin 07 (Beta/delta-agtx) family. 03 (aga-4) subfamily. JZTX sub-subfamily. As to expression, expressed by the venom gland.

It is found in the secreted. Functionally, probable ion channel inhibitor. The chain is U25-theraphotoxin-Cg1b from Chilobrachys guangxiensis (Chinese earth tiger tarantula).